Here is a 364-residue protein sequence, read N- to C-terminus: Autophagy-related protein 14 (364 aa).

Positions 5–20 (CPICETQSHVFYCAHC) are cysteine repeats. The stretch at 38-114 (LGKINNALRN…QDRRIKEKSR (77 aa)) forms a coiled coil.

Belongs to the ATG14 family. Component of the autophagy-specific VPS34 PI3-kinase complex I composed of VPS15, VPS30, VPS34, ATG14 and ATG38. Interacts directly with ATG38.

It localises to the preautophagosomal structure membrane. The protein localises to the vacuole membrane. Required for cytoplasm to vacuole transport (Cvt) and autophagy as a part of the autophagy-specific VPS34 PI3-kinase complex I. This complex is essential to recruit the ATG8-phosphatidylinositol conjugate and the ATG12-ATG5 conjugate to the pre-autophagosomal structure. ATG14 mediates the specific binding of the VPS34 PI3-kinase complex I to the preautophagosomal structure (PAS). Required for survival and/or proliferation in kidneys and in brain. The polypeptide is Autophagy-related protein 14 (Candida glabrata (strain ATCC 2001 / BCRC 20586 / JCM 3761 / NBRC 0622 / NRRL Y-65 / CBS 138) (Yeast)).